Reading from the N-terminus, the 530-residue chain is ATP-dependent RNA helicase DBP3 (530 aa).

Over residues 1-20 the composition is skewed to basic and acidic residues; that stretch reads MSKDEIKDKKRKSEEYEVVD. The tract at residues 1-77 is disordered; it reads MSKDEIKDKK…VASVSTSSTV (77 aa). Residues 19-58 adopt a coiled-coil conformation; the sequence is VDKKKHKKDKKDKKEKKDKKEKKLKKDKKDKKDKKETKSE. Over residues 21–50 the composition is skewed to basic residues; it reads KKKHKKDKKDKKEKKDKKEKKLKKDKKDKK. The span at 67–77 shows a compositional bias: low complexity; that stretch reads SVASVSTSSTV. The Q motif motif lies at 117–143; it reads LSFSHISLDSRIQAEISKFPKPTPIQA. In terms of domain architecture, Helicase ATP-binding spans 146 to 322; it reads WPYLLAGKDV…STFMNSPIKV (177 aa). 159–166 is a binding site for ATP; it reads AETGSGKT. Residues 269-272 carry the DEAD box motif; sequence DEAD. The Helicase C-terminal domain occupies 351–500; that stretch reads KLLELLKKYQ…PVPEELKKFG (150 aa).

The protein belongs to the DEAD box helicase family. DDX5/DBP2 subfamily.

It is found in the nucleus. It localises to the nucleolus. It catalyses the reaction ATP + H2O = ADP + phosphate + H(+). In terms of biological role, ATP-dependent RNA helicase required for 60S ribosomal subunit synthesis. Involved in efficient pre-rRNA processing, predominantly at site A3, which is necessary for the normal formation of 25S and 5.8S rRNAs. This chain is ATP-dependent RNA helicase DBP3 (DBP3), found in Vanderwaltozyma polyspora (strain ATCC 22028 / DSM 70294 / BCRC 21397 / CBS 2163 / NBRC 10782 / NRRL Y-8283 / UCD 57-17) (Kluyveromyces polysporus).